Consider the following 254-residue polypeptide: Alcohol dehydrogenase (254 aa).

10–33 (FVAGLGGIGLDTSKGIVKAGPKNL) contributes to the NAD(+) binding site. Serine 138 serves as a coordination point for substrate. The active-site Proton acceptor is tyrosine 151.

The protein belongs to the short-chain dehydrogenases/reductases (SDR) family. Homodimer.

The enzyme catalyses a primary alcohol + NAD(+) = an aldehyde + NADH + H(+). The catalysed reaction is a secondary alcohol + NAD(+) = a ketone + NADH + H(+). This chain is Alcohol dehydrogenase (Adh), found in Drosophila immigrans (Fruit fly).